Here is a 325-residue protein sequence, read N- to C-terminus: MAKRIQFAAYGGPEVLEYRDYQPAEPGPREVRVRNRAIGLNFIDTYYRSGLYPAPGLPSGLGSEGAGEVEAVGSEVTRFKVGDRVAYATGPLGAYSELHVLAEEKLVHLPDGIDFEQAAAVMLKGLTTQYLLRQTYELRGGETILFHAAAGGVGLFACQWAKALGVQLIGTVSSPEKARLARQHGAWETIDYSHENVARRVLELTDGKKCPVVYDSVGKDTWETSLDCVAPRGLLVSFGNASGPVTGVNLGILSQKGSLYVTRPTLGSYADTPEKLQAMADELFGLIERGDIRIEINQRFALAEAARAHTELAARRTTGSTVLLP.

This sequence belongs to the zinc-containing alcohol dehydrogenase family. Quinone oxidoreductase subfamily.

The catalysed reaction is 2 a quinone + NADPH + H(+) = 2 a 1,4-benzosemiquinone + NADP(+). This chain is Quinone oxidoreductase (qor), found in Pseudomonas aeruginosa (strain ATCC 15692 / DSM 22644 / CIP 104116 / JCM 14847 / LMG 12228 / 1C / PRS 101 / PAO1).